The sequence spans 772 residues: MSKDQSYVLKAWEVTVRKTQQAKKRANSVFGTVSVAPHTDNDTTTDDNDDETTTNRSSLEEFYHAERVLPNGDYYTGQWYDSFPHGHGKYLWTDGCMYIGDWYNGKTMGNGKFGWPSGATYEGEFKSGYMDGIGTYTGPSGDAYKGQWVMNLKHGHGVKSFANGDAYDGEWRRGLQEGQGKYQWSDGSYYIGEWKNGTICGKGSFVWTNGNRYDGFWDEGFPRGNGTFKWDNGSFYVGHWSKDPEEMNGTYYPSGNEGNLEWDPKDLFNNLSEYTICSGERVPTLPSQKKLSVWNSSKRIEKPRRTSVDGRVSVGVDRAFEKMNMWGNEIGEGGADMRKELDAELMRLDAEGLQSLKSSPVPMKLPKAGRKQGETISKGHRNYELMLNLQLGIRHSVGRQAPAASLDLKPSAFDPKDKIWRRFPREGTKYTPPHQSTEFKWKDYCPLVFRSLRKLFKVDPADYMLSICGNDALRELSSPGKSGSFFYLTNDDRYMIKTMKKSETKVLLGMLAAYYNHVRAFENSLVIRFFGLHCVKLNGPTQKKVRFVIMGNLFCSKYSVHRRFDLKGSSLGRTTDKPESEIDSNTILKDLDLNFIFRLQKAWYQEFIRQIDKDCEFLEQERIMDYSLLVGIHFREASVAGELIPSGARTPIGESEEESGPRLSRAEVDELLSDPSRWASIRLGTNMPARAERTMRKNDSELQLVGEPTGEFYEVVMIFGIIDILQDYDISKKLEHAYKSIQYDPSSISAVDPRQYSRRFRDFIFKVFTDDN.

The interval 22–56 (AKKRANSVFGTVSVAPHTDNDTTTDDNDDETTTNR) is disordered. The segment covering 43-52 (TTTDDNDDET) has biased composition (acidic residues). MORN repeat units follow at residues 75–97 (YTGQWYDSFPHGHGKYLWTDGCM), 98–120 (YIGDWYNGKTMGNGKFGWPSGAT), 121–143 (YEGEFKSGYMDGIGTYTGPSGDA), 144–166 (YKGQWVMNLKHGHGVKSFANGDA), 167–189 (YDGEWRRGLQEGQGKYQWSDGSY), 190–212 (YIGEWKNGTICGKGSFVWTNGNR), 213–235 (YDGFWDEGFPRGNGTFKWDNGSF), and 236–257 (YVGHWSKDPEEMNGTYYPSGNE). Positions 377-768 (SKGHRNYELM…RFRDFIFKVF (392 aa)) constitute a PIPK domain. The disordered stretch occupies residues 646 to 665 (SGARTPIGESEEESGPRLSR). The segment at 728-749 (YDISKKLEHAYKSIQYDPSSIS) is activation loop.

It catalyses the reaction a 1,2-diacyl-sn-glycero-3-phospho-(1D-myo-inositol 4-phosphate) + ATP = a 1,2-diacyl-sn-glycero-3-phospho-(1D-myo-inositol-4,5-bisphosphate) + ADP + H(+). This chain is Phosphatidylinositol 4-phosphate 5-kinase 5 (PIP5K5), found in Arabidopsis thaliana (Mouse-ear cress).